A 125-amino-acid chain; its full sequence is Aspartate 1-decarboxylase (125 aa).

The active-site Schiff-base intermediate with substrate; via pyruvic acid is Ser-25. Ser-25 is subject to Pyruvic acid (Ser). A substrate-binding site is contributed by Thr-57. Residue Tyr-58 is the Proton donor of the active site. 71–73 (GAA) contributes to the substrate binding site.

This sequence belongs to the PanD family. Heterooctamer of four alpha and four beta subunits. Requires pyruvate as cofactor. Is synthesized initially as an inactive proenzyme, which is activated by self-cleavage at a specific serine bond to produce a beta-subunit with a hydroxyl group at its C-terminus and an alpha-subunit with a pyruvoyl group at its N-terminus.

It localises to the cytoplasm. It carries out the reaction L-aspartate + H(+) = beta-alanine + CO2. It functions in the pathway cofactor biosynthesis; (R)-pantothenate biosynthesis; beta-alanine from L-aspartate: step 1/1. Catalyzes the pyruvoyl-dependent decarboxylation of aspartate to produce beta-alanine. The sequence is that of Aspartate 1-decarboxylase from Hydrogenobaculum sp. (strain Y04AAS1).